Reading from the N-terminus, the 180-residue chain is Large ribosomal subunit protein eL20 (180 aa).

The protein belongs to the eukaryotic ribosomal protein eL20 family.

This Caenorhabditis elegans protein is Large ribosomal subunit protein eL20.